Consider the following 678-residue polypeptide: UvrABC system protein B (678 aa).

Positions 31-417 (EGLENGLAHQ…KSGGEIIDQV (387 aa)) constitute a Helicase ATP-binding domain. An ATP-binding site is contributed by 44–51 (GVTGSGKT). Residues 97–120 (YYDYYQPEAYVPSSDTFIEKDASI) carry the Beta-hairpin motif. Positions 436–589 (QVDDLLSEAR…QMKYNEARGI (154 aa)) constitute a Helicase C-terminal domain. In terms of domain architecture, UVR spans 638–673 (QQQIKKLEQQMYKYAQDLEFEKAAAVRDQLQQLREH).

The protein belongs to the UvrB family. In terms of assembly, forms a heterotetramer with UvrA during the search for lesions. Interacts with UvrC in an incision complex.

The protein resides in the cytoplasm. The UvrABC repair system catalyzes the recognition and processing of DNA lesions. A damage recognition complex composed of 2 UvrA and 2 UvrB subunits scans DNA for abnormalities. Upon binding of the UvrA(2)B(2) complex to a putative damaged site, the DNA wraps around one UvrB monomer. DNA wrap is dependent on ATP binding by UvrB and probably causes local melting of the DNA helix, facilitating insertion of UvrB beta-hairpin between the DNA strands. Then UvrB probes one DNA strand for the presence of a lesion. If a lesion is found the UvrA subunits dissociate and the UvrB-DNA preincision complex is formed. This complex is subsequently bound by UvrC and the second UvrB is released. If no lesion is found, the DNA wraps around the other UvrB subunit that will check the other stand for damage. In Pasteurella multocida (strain Pm70), this protein is UvrABC system protein B.